Here is a 312-residue protein sequence, read N- to C-terminus: Carbonic anhydrase 4 (312 aa).

Positions 1-18 (MRLLLALLVLAAAPPQAR) are cleaved as a signal peptide. Residues 21-285 (SHWCYQIQVK…LGQRQVFRSG (265 aa)) enclose the Alpha-carbonic anhydrase domain. Disulfide bonds link Cys-24–Cys-36 and Cys-46–Cys-229. N-linked (GlcNAc...) asparagine glycosylation is present at Asn-33. His-88 serves as the catalytic Proton donor/acceptor. Residues His-115, His-117, and His-140 each contribute to the Zn(2+) site. 2 N-linked (GlcNAc...) asparagine glycosylation sites follow: Asn-152 and Asn-195. Residue 225–226 (TT) participates in substrate binding. The N-linked (GlcNAc...) asparagine glycan is linked to Asn-265. A lipid anchor (GPI-anchor amidated serine) is attached at Ser-284. A propeptide spans 285 to 312 (GAPGLLLAQPLPTLLAPVLACLTVGFLR) (removed in mature form).

This sequence belongs to the alpha-carbonic anhydrase family. As to quaternary structure, interacts with SLC4A4. Zn(2+) is required as a cofactor.

It is found in the cell membrane. It catalyses the reaction hydrogencarbonate + H(+) = CO2 + H2O. Its activity is regulated as follows. Inhibited by acetazolamide. Catalyzes the reversible hydration of carbon dioxide into bicarbonate and protons and thus is essential to maintaining intracellular and extracellular pH. May stimulate the sodium/bicarbonate transporter activity of SLC4A4 that acts in pH homeostasis. It is essential for acid overload removal from the retina and retina epithelium, and acid release in the choriocapillaris in the choroid. The sequence is that of Carbonic anhydrase 4 (CA4) from Bos taurus (Bovine).